Reading from the N-terminus, the 119-residue chain is Large ribosomal subunit protein uL18 (119 aa).

Belongs to the universal ribosomal protein uL18 family. In terms of assembly, part of the 50S ribosomal subunit; part of the 5S rRNA/L5/L18/L25 subcomplex. Contacts the 5S and 23S rRNAs.

In terms of biological role, this is one of the proteins that bind and probably mediate the attachment of the 5S RNA into the large ribosomal subunit, where it forms part of the central protuberance. This is Large ribosomal subunit protein uL18 from Borrelia hermsii (strain HS1 / DAH).